Here is a 459-residue protein sequence, read N- to C-terminus: Ribulose bisphosphate carboxylase large chain (459 aa).

Lysine 4 bears the N6,N6,N6-trimethyllysine mark. Substrate-binding residues include asparagine 113 and threonine 163. Lysine 165 serves as the catalytic Proton acceptor. Lysine 167 is a substrate binding site. Mg(2+)-binding residues include lysine 191, aspartate 193, and glutamate 194. Lysine 191 carries the N6-carboxylysine modification. Histidine 284 serves as the catalytic Proton acceptor. Arginine 285, histidine 317, and serine 369 together coordinate substrate.

This sequence belongs to the RuBisCO large chain family. Type I subfamily. In terms of assembly, heterohexadecamer of 8 large chains and 8 small chains; disulfide-linked. The disulfide link is formed within the large subunit homodimers. It depends on Mg(2+) as a cofactor. Post-translationally, the disulfide bond which can form in the large chain dimeric partners within the hexadecamer appears to be associated with oxidative stress and protein turnover.

The protein localises to the plastid. It localises to the chloroplast. It catalyses the reaction 2 (2R)-3-phosphoglycerate + 2 H(+) = D-ribulose 1,5-bisphosphate + CO2 + H2O. The catalysed reaction is D-ribulose 1,5-bisphosphate + O2 = 2-phosphoglycolate + (2R)-3-phosphoglycerate + 2 H(+). Its function is as follows. RuBisCO catalyzes two reactions: the carboxylation of D-ribulose 1,5-bisphosphate, the primary event in carbon dioxide fixation, as well as the oxidative fragmentation of the pentose substrate in the photorespiration process. Both reactions occur simultaneously and in competition at the same active site. This Cephalotus follicularis (Albany pitcher plant) protein is Ribulose bisphosphate carboxylase large chain.